Here is a 283-residue protein sequence, read N- to C-terminus: Putative replication protein XF_b0001 (283 aa).

This Xylella fastidiosa (strain 9a5c) protein is Putative replication protein XF_b0001.